Here is a 598-residue protein sequence, read N- to C-terminus: MDSYDLFRRLGAGAKFDVKRFSADATRFQVGKRKFDSESLEVLKGLDFFGNKKSVSDECGALQIHQEPPNEEKTQGVLLERSKEPKKKKRKKMTSEVPAQEDFDGGIQWTSSVEAKLQDEKVSGEKKLTSGKLEHLRKEKVNFFRNKHKIHVQGTDLPDPIATFQQLDQEYKINSRLLQNILDAGFQVPTPIQMQAIPVMLHGRELLASAPTGSGKTLAFSIPILMQLKQPTNKGFRALVISPTRELASQIHRELIKISEGTGFRIHMIHKAAIAAKKFGPKSSKKFDILVTTPNRLIYLLKQDPPGIDLTNVEWLVVDESDKLFEDGKTGFREQLASIFLACTSPKVRRAMFSATFAYDVEQWCKLNLDNVVSVSIGARNSAVETVEQELLFVGSETGKLLAMRELVKKGFKPPVLVFVQSIERAKELFHELIYEGINVDVIHAERTQQQRDNTVHSFRAGKIWVLICTALLARGIDFKGVNLVINYDFPTSSVEYIHRIGRTGRAGNRGKAVTFFTEDDKPLLRSVANVIQQAGCPVPEYIKGFQKLLSKQKKKMIKKPLERESICTTPKYFLEQAKQKKVAGQNSKKKETLKEKS.

Lys15 is subject to N6-acetyllysine. Ser39 bears the Phosphoserine mark. Positions 166–194 (QLDQEYKINSRLLQNILDAGFQVPTPIQM) match the Q motif motif. The region spanning 197 to 375 (IPVMLHGREL…KLNLDNVVSV (179 aa)) is the Helicase ATP-binding domain. Residue 210–217 (APTGSGKT) coordinates ATP. The DEAD box motif lies at 319 to 322 (DESD). One can recognise a Helicase C-terminal domain in the interval 386 to 547 (TVEQELLFVG…PVPEYIKGFQ (162 aa)).

This sequence belongs to the DEAD box helicase family. DDX52/ROK1 subfamily.

It localises to the nucleus. Its subcellular location is the nucleolus. It catalyses the reaction ATP + H2O = ADP + phosphate + H(+). Required for efficient ribosome biogenesis. May control cell cycle progression by regulating translation of mRNAs that contain a terminal oligo pyrimidine (TOP) motif in their 5' UTRs, such as GTPBP4. The sequence is that of Probable ATP-dependent RNA helicase DDX52 (Ddx52) from Mus musculus (Mouse).